A 394-amino-acid polypeptide reads, in one-letter code: MTNRDRIGLTWISFFSYALTGAVVIVTGMVLENIAAYFQLPVAQMSNTFTFLNAGILLAVFLNAWLMEIVPLKRQLIFGFVLMVLAVLGLMNSHSLSVFSLCMFVLGVVSGITMSIGTFLITHLYEGRQRGSRLLFTDSFFSMAGTLFPIIAAAILARSLPWYWVYACIGVIYVAIFILALCFEFPQLGKKAVQGQPVAKEKWGLGVALLAVAALCYILGQLGFIGWVPQYATKNMGMDITEAGSVVGYFWTAYMIGMWAFSAILRFFDPQRIVTALALASTLLMYWFINTTDASMLKWIIMGLGFFSSAIYTTIITLGSLQTKVSSPKLVNFILTCGTIGTMLTFVVTGPIVDKAGFHAALATTNSLYAVVFLMCLLLGFVSKHKQHGHMDPH.

Transmembrane regions (helical) follow at residues 11–31 (WISF…GMVL), 51–71 (FLNA…EIVP), 76–96 (LIFG…SHSL), 101–121 (LCMF…TFLI), 135–155 (LFTD…AAAI), 163–183 (YWVY…ALCF), 205–225 (LGVA…LGFI), 245–265 (SVVG…SAIL), 273–293 (IVTA…NTTD), 299–319 (WIIM…ITLG), 333–353 (FILT…GPIV), and 362–382 (LATT…LGFV).

Belongs to the major facilitator superfamily. TsgA family.

It localises to the cell inner membrane. This chain is Protein TsgA homolog, found in Erwinia tasmaniensis (strain DSM 17950 / CFBP 7177 / CIP 109463 / NCPPB 4357 / Et1/99).